The following is a 184-amino-acid chain: Protein Syd (184 aa).

The protein belongs to the Syd family.

It localises to the cell inner membrane. In terms of biological role, interacts with the SecY protein in vivo. May bind preferentially to an uncomplexed state of SecY, thus functioning either as a chelating agent for excess SecY in the cell or as a regulatory factor that negatively controls the translocase function. The protein is Protein Syd of Photobacterium profundum (strain SS9).